Here is a 167-residue protein sequence, read N- to C-terminus: Phosphopantetheine adenylyltransferase (167 aa).

Serine 10 is a substrate binding site. Residues 10–11 and histidine 18 each bind ATP; that span reads SF. 3 residues coordinate substrate: lysine 42, alanine 79, and arginine 93. ATP is bound by residues 94–96, glutamate 104, and 129–135; these read GLR and VGHITAT.

Belongs to the bacterial CoaD family. As to quaternary structure, homohexamer. Requires Mg(2+) as cofactor.

Its subcellular location is the cytoplasm. The catalysed reaction is (R)-4'-phosphopantetheine + ATP + H(+) = 3'-dephospho-CoA + diphosphate. The protein operates within cofactor biosynthesis; coenzyme A biosynthesis; CoA from (R)-pantothenate: step 4/5. In terms of biological role, reversibly transfers an adenylyl group from ATP to 4'-phosphopantetheine, yielding dephospho-CoA (dPCoA) and pyrophosphate. This is Phosphopantetheine adenylyltransferase from Methylocella silvestris (strain DSM 15510 / CIP 108128 / LMG 27833 / NCIMB 13906 / BL2).